A 266-amino-acid polypeptide reads, in one-letter code: Tryptophan synthase alpha chain (266 aa).

Residues E49 and D60 each act as proton acceptor in the active site.

This sequence belongs to the TrpA family. As to quaternary structure, tetramer of two alpha and two beta chains.

The enzyme catalyses (1S,2R)-1-C-(indol-3-yl)glycerol 3-phosphate + L-serine = D-glyceraldehyde 3-phosphate + L-tryptophan + H2O. It functions in the pathway amino-acid biosynthesis; L-tryptophan biosynthesis; L-tryptophan from chorismate: step 5/5. The alpha subunit is responsible for the aldol cleavage of indoleglycerol phosphate to indole and glyceraldehyde 3-phosphate. The protein is Tryptophan synthase alpha chain of Trichormus variabilis (strain ATCC 29413 / PCC 7937) (Anabaena variabilis).